The following is a 220-amino-acid chain: Adenylate kinase (220 aa).

An ATP-binding site is contributed by 10–15 (GAGKGT). The interval 30–59 (STGDMLRAAVKNCTPLGLKAKEIMDAGGLV) is NMP. AMP-binding positions include T31, R36, 57-59 (GLV), 85-88 (GFPR), and Q92. Residues 126-163 (GRRTCPSCGKGFHVLFAPPRKAGVCDFCGADLVQRGDD) are LID. R127 serves as a coordination point for ATP. Residues C130, C133, C150, and C153 each coordinate Zn(2+). AMP-binding residues include R160 and R171. Position 199 (L199) interacts with ATP.

Belongs to the adenylate kinase family. As to quaternary structure, monomer.

The protein localises to the cytoplasm. It catalyses the reaction AMP + ATP = 2 ADP. The protein operates within purine metabolism; AMP biosynthesis via salvage pathway; AMP from ADP: step 1/1. In terms of biological role, catalyzes the reversible transfer of the terminal phosphate group between ATP and AMP. Plays an important role in cellular energy homeostasis and in adenine nucleotide metabolism. This Pelobacter propionicus (strain DSM 2379 / NBRC 103807 / OttBd1) protein is Adenylate kinase.